Reading from the N-terminus, the 392-residue chain is ERBB-3 BINDING PROTEIN 1 (392 aa).

Necessary for nucleolar localization stretches follow at residues 1-50 and 298-392; these read MSSD…IVDI and HLQP…NAQE. An RNA-binding region spans residues 48 to 56; it reads VDICEKGDS. The tract at residues 355 to 372 is interaction with RNA; that stretch reads GIKKKKGGGKKKKAQKAG. The Nuclear localization signal motif lies at 357–367; that stretch reads KKKKGGGKKKK. Residues 358–369 are compositionally biased toward basic residues; that stretch reads KKKGGGKKKKAQ. The interval 358–392 is disordered; that stretch reads KKKGGGKKKKAQKAGEKGEASTEAEPMDASSNAQE.

This sequence belongs to the peptidase M24 family. Component of a ribonucleoprotein complex. Interacts with REIL1 and REIL2. In terms of tissue distribution, strongly expressed in calls, roots and flowers, to a lower extent, in stems and siliques, but hardly detectable in leaves.

The protein localises to the nucleus. Binds RNA. Associates with 28S, 18S and 5.8S mature rRNAs, several rRNA precursors and probably U3 small nucleolar RNA. May be involved in regulation of intermediate and late steps of rRNA processing. May be involved in ribosome assembly. Required for expression of cell cycle genes such as CYCD3-1, RNR2A and CDKB1-1. Promotes, in a dose- and auxin-dependent manner, organ growth by stimulating both cell proliferation and expansion, via the regulation of RBR1 levels. The protein is ERBB-3 BINDING PROTEIN 1 of Arabidopsis thaliana (Mouse-ear cress).